The chain runs to 235 residues: Small ribosomal subunit protein uS3 (235 aa).

The KH type-2 domain occupies 39–107 (VRKFLNKELA…PAQINIAEVK (69 aa)).

The protein belongs to the universal ribosomal protein uS3 family. In terms of assembly, part of the 30S ribosomal subunit. Forms a tight complex with proteins S10 and S14.

Functionally, binds the lower part of the 30S subunit head. Binds mRNA in the 70S ribosome, positioning it for translation. This chain is Small ribosomal subunit protein uS3, found in Mannheimia succiniciproducens (strain KCTC 0769BP / MBEL55E).